The chain runs to 615 residues: Aldehyde oxidase GLOX1 (615 aa).

Positions 1-25 are cleaved as a signal peptide; sequence MKKSTRLLWLLSIIVLVAAVSKAVA. An N-linked (GlcNAc...) asparagine glycan is attached at asparagine 35. Residues 70–89 are disordered; the sequence is PPKAGKGKGKGKGRGTVAAG. Basic residues predominate over residues 72-82; it reads KAGKGKGKGKG. N-linked (GlcNAc...) asparagine glycosylation is found at asparagine 187 and asparagine 297.

The protein localises to the secreted. It carries out the reaction an aldehyde + O2 + H2O = a carboxylate + H2O2 + H(+). Functionally, catalyzes the oxidation of aldehydes to the corresponding carboxylate by coupling the reaction to the reduction of dioxygen to hydrogen peroxide. Substrates include glyoxal and other aldehydes. May be regulated by the transcription factor MYB80 during anther development and play a role in tapetum and pollen development. The sequence is that of Aldehyde oxidase GLOX1 from Arabidopsis thaliana (Mouse-ear cress).